The following is a 107-amino-acid chain: U1-lycotoxin-Ls1e (107 aa).

The N-terminal stretch at 1 to 20 (MMKVLVVVALLVTLISYSSS) is a signal peptide. A propeptide spanning residues 21–41 (EGIDDLEADELLSLMANEQTR) is cleaved from the precursor. 4 disulfide bridges follow: C44–C59, C51–C68, C58–C86, and C70–C84.

It belongs to the neurotoxin 19 (CSTX) family. 04 (U1-Lctx) subfamily. Expressed by the venom gland.

The protein resides in the secreted. This is U1-lycotoxin-Ls1e from Lycosa singoriensis (Wolf spider).